Here is a 219-residue protein sequence, read N- to C-terminus: 2-C-methyl-D-erythritol 4-phosphate cytidylyltransferase (219 aa).

This sequence belongs to the IspD/TarI cytidylyltransferase family. IspD subfamily.

It catalyses the reaction 2-C-methyl-D-erythritol 4-phosphate + CTP + H(+) = 4-CDP-2-C-methyl-D-erythritol + diphosphate. Its pathway is isoprenoid biosynthesis; isopentenyl diphosphate biosynthesis via DXP pathway; isopentenyl diphosphate from 1-deoxy-D-xylulose 5-phosphate: step 2/6. Its function is as follows. Catalyzes the formation of 4-diphosphocytidyl-2-C-methyl-D-erythritol from CTP and 2-C-methyl-D-erythritol 4-phosphate (MEP). In Endomicrobium trichonymphae, this protein is 2-C-methyl-D-erythritol 4-phosphate cytidylyltransferase.